A 124-amino-acid polypeptide reads, in one-letter code: UPF0738 protein GWCH70_0774 (124 aa).

Belongs to the UPF0738 family.

The polypeptide is UPF0738 protein GWCH70_0774 (Geobacillus sp. (strain WCH70)).